The following is a 247-amino-acid chain: Virulence plasmid protein pGP6-D (247 aa).

The protein belongs to the UPF0137 (pGP6-D) family.

This is Virulence plasmid protein pGP6-D from Chlamydia trachomatis.